We begin with the raw amino-acid sequence, 198 residues long: Imidazoleglycerol-phosphate dehydratase (198 aa).

Belongs to the imidazoleglycerol-phosphate dehydratase family.

Its subcellular location is the cytoplasm. It carries out the reaction D-erythro-1-(imidazol-4-yl)glycerol 3-phosphate = 3-(imidazol-4-yl)-2-oxopropyl phosphate + H2O. The protein operates within amino-acid biosynthesis; L-histidine biosynthesis; L-histidine from 5-phospho-alpha-D-ribose 1-diphosphate: step 6/9. This is Imidazoleglycerol-phosphate dehydratase from Janthinobacterium sp. (strain Marseille) (Minibacterium massiliensis).